The primary structure comprises 300 residues: 33 kDa chaperonin (300 aa).

Disulfide bonds link Cys247–Cys249 and Cys280–Cys283.

This sequence belongs to the HSP33 family. Post-translationally, under oxidizing conditions two disulfide bonds are formed involving the reactive cysteines. Under reducing conditions zinc is bound to the reactive cysteines and the protein is inactive.

Its subcellular location is the cytoplasm. Functionally, redox regulated molecular chaperone. Protects both thermally unfolding and oxidatively damaged proteins from irreversible aggregation. Plays an important role in the bacterial defense system toward oxidative stress. In Prochlorococcus marinus (strain MIT 9515), this protein is 33 kDa chaperonin.